Reading from the N-terminus, the 366-residue chain is 3-dehydroquinate synthase (366 aa).

Residues 75 to 80 (DGEQYK), 109 to 113 (GVIGD), 133 to 134 (TT), lysine 146, lysine 155, and 173 to 176 (CLST) each bind NAD(+). Zn(2+) contacts are provided by glutamate 188, histidine 251, and histidine 268.

The protein belongs to the sugar phosphate cyclases superfamily. Dehydroquinate synthase family. Requires Co(2+) as cofactor. It depends on Zn(2+) as a cofactor. The cofactor is NAD(+).

It is found in the cytoplasm. It carries out the reaction 7-phospho-2-dehydro-3-deoxy-D-arabino-heptonate = 3-dehydroquinate + phosphate. It participates in metabolic intermediate biosynthesis; chorismate biosynthesis; chorismate from D-erythrose 4-phosphate and phosphoenolpyruvate: step 2/7. In terms of biological role, catalyzes the conversion of 3-deoxy-D-arabino-heptulosonate 7-phosphate (DAHP) to dehydroquinate (DHQ). The sequence is that of 3-dehydroquinate synthase from Vibrio campbellii (strain ATCC BAA-1116).